The sequence spans 104 residues: uncharacterized protein (104 aa).

Residues 42 to 104 (ARDSFDQDFE…AREERHKLGR (63 aa)) are a coiled coil.

The protein belongs to the WXG100 family.

This is an uncharacterized protein from Bacillus subtilis (strain 168).